The primary structure comprises 285 residues: 4-hydroxybenzoate octaprenyltransferase (285 aa).

7 consecutive transmembrane segments (helical) span residues 20–39 (GSYL…AQGL), 92–112 (ALGL…ALNW), 137–157 (FPQV…FMAV), 159–179 (EAVP…TVAY), 206–226 (YDRL…LGMG), 228–248 (YLGF…LFIH), and 260–280 (ACFS…LGIA).

It belongs to the UbiA prenyltransferase family. Mg(2+) is required as a cofactor.

The protein resides in the cell inner membrane. The enzyme catalyses all-trans-octaprenyl diphosphate + 4-hydroxybenzoate = 4-hydroxy-3-(all-trans-octaprenyl)benzoate + diphosphate. It participates in cofactor biosynthesis; ubiquinone biosynthesis. Functionally, catalyzes the prenylation of para-hydroxybenzoate (PHB) with an all-trans polyprenyl group. Mediates the second step in the final reaction sequence of ubiquinone-8 (UQ-8) biosynthesis, which is the condensation of the polyisoprenoid side chain with PHB, generating the first membrane-bound Q intermediate 3-octaprenyl-4-hydroxybenzoate. This Pseudoalteromonas atlantica (strain T6c / ATCC BAA-1087) protein is 4-hydroxybenzoate octaprenyltransferase.